Consider the following 734-residue polypeptide: Photosystem I P700 chlorophyll a apoprotein A2 (734 aa).

Helical transmembrane passes span isoleucine 46–alanine 69, leucine 135–glutamine 158, leucine 175–isoleucine 199, isoleucine 273–tyrosine 291, valine 330–tyrosine 353, alanine 369–isoleucine 395, alanine 417–histidine 439, and phenylalanine 517–valine 535. 2 residues coordinate [4Fe-4S] cluster: cysteine 559 and cysteine 568. 2 consecutive transmembrane segments (helical) span residues alanine 575 to tryptophan 596 and leucine 643 to isoleucine 665. Histidine 654, methionine 662, and tyrosine 670 together coordinate chlorophyll a. Phylloquinone is bound at residue tryptophan 671. Residues leucine 707 to alanine 727 traverse the membrane as a helical segment.

The protein belongs to the PsaA/PsaB family. The PsaA/B heterodimer binds the P700 chlorophyll special pair and subsequent electron acceptors. PSI consists of a core antenna complex that captures photons, and an electron transfer chain that converts photonic excitation into a charge separation. The eukaryotic PSI reaction center is composed of at least 11 subunits. Requires P700 is a chlorophyll a/chlorophyll a' dimer, A0 is one or more chlorophyll a, A1 is one or both phylloquinones and FX is a shared 4Fe-4S iron-sulfur center. as cofactor.

It is found in the plastid. Its subcellular location is the chloroplast thylakoid membrane. It carries out the reaction reduced [plastocyanin] + hnu + oxidized [2Fe-2S]-[ferredoxin] = oxidized [plastocyanin] + reduced [2Fe-2S]-[ferredoxin]. Functionally, psaA and PsaB bind P700, the primary electron donor of photosystem I (PSI), as well as the electron acceptors A0, A1 and FX. PSI is a plastocyanin-ferredoxin oxidoreductase, converting photonic excitation into a charge separation, which transfers an electron from the donor P700 chlorophyll pair to the spectroscopically characterized acceptors A0, A1, FX, FA and FB in turn. Oxidized P700 is reduced on the lumenal side of the thylakoid membrane by plastocyanin. The polypeptide is Photosystem I P700 chlorophyll a apoprotein A2 (Platanus occidentalis (Sycamore)).